The chain runs to 319 residues: Ferrochelatase (319 aa).

His-193 and Glu-274 together coordinate Fe cation.

Belongs to the ferrochelatase family.

It localises to the cytoplasm. The catalysed reaction is heme b + 2 H(+) = protoporphyrin IX + Fe(2+). It functions in the pathway porphyrin-containing compound metabolism; protoheme biosynthesis; protoheme from protoporphyrin-IX: step 1/1. Catalyzes the ferrous insertion into protoporphyrin IX. The chain is Ferrochelatase from Erwinia tasmaniensis (strain DSM 17950 / CFBP 7177 / CIP 109463 / NCPPB 4357 / Et1/99).